A 1440-amino-acid polypeptide reads, in one-letter code: ABC transporter G family member 46 (1440 aa).

Residues 1-42 (MDDDVDAGEIYAVDRQREEGSASAAAFSRSPSTGRVDDDDDD) form a disordered region. The span at 21-32 (SASAAAFSRSPS) shows a compositional bias: low complexity. The region spanning 137–419 (ANTLHMTTRS…FKSLGFKCLE (283 aa)) is the ABC transporter 1 domain. 170-177 (GSPGSGKT) is an ATP binding site. An ABC transmembrane type-2 1 domain is found at 497–710 (KILKANIDRE…ALNALAVNEF (214 aa)). Transmembrane regions (helical) follow at residues 516 to 536 (LYIF…SVFI), 561 to 581 (AIMF…PVFF), 603 to 623 (TPIS…VIGF), 634 to 654 (FLVL…IAAL), 659 to 679 (VVAS…SGFI), 688 to 708 (WLIW…LAVN), and 745 to 765 (IGLG…TICL). Residues 794-829 (DQEPSSGGRVTNDKRYTEGGNNDEATSSNANHNSSP) are disordered. The segment covering 812–829 (GGNNDEATSSNANHNSSP) has biased composition (polar residues). The region spanning 843–1095 (MTFEDIRYSI…ELIKYFESIE (253 aa)) is the ABC transporter 2 domain. Residue 888–895 (GISGAGKT) coordinates ATP. Residues 1168–1382 (IQCLACLWKQ…TINGLVTSQF (215 aa)) form the ABC transmembrane type-2 2 domain. A run of 7 helical transmembrane segments spans residues 1188–1208 (IAVN…MFWG), 1219–1236 (LLSA…LGVQ), 1271–1291 (VVVE…IVYS), 1302–1322 (FFWY…YGMM), 1332–1352 (MSSI…GFLI), 1357–1377 (IPIW…INGL), and 1410–1430 (LWVA…LFGF).

Belongs to the ABC transporter superfamily. ABCG family. PDR (TC 3.A.1.205) subfamily.

It localises to the membrane. Its function is as follows. May be a general defense protein. In Oryza sativa subsp. japonica (Rice), this protein is ABC transporter G family member 46.